A 158-amino-acid chain; its full sequence is UPF0178 protein RPA2191 (158 aa).

The protein belongs to the UPF0178 family.

This Rhodopseudomonas palustris (strain ATCC BAA-98 / CGA009) protein is UPF0178 protein RPA2191.